The following is a 231-amino-acid chain: 7-cyano-7-deazaguanine synthase (231 aa).

8-18 is a binding site for ATP; the sequence is FSGGQDSTTCL. Zn(2+) contacts are provided by C188, C197, C200, and C203.

This sequence belongs to the QueC family. Zn(2+) is required as a cofactor.

The catalysed reaction is 7-carboxy-7-deazaguanine + NH4(+) + ATP = 7-cyano-7-deazaguanine + ADP + phosphate + H2O + H(+). The protein operates within purine metabolism; 7-cyano-7-deazaguanine biosynthesis. Catalyzes the ATP-dependent conversion of 7-carboxy-7-deazaguanine (CDG) to 7-cyano-7-deazaguanine (preQ(0)). This is 7-cyano-7-deazaguanine synthase from Escherichia coli (strain SE11).